The sequence spans 508 residues: Photosystem II CP47 reaction center protein (508 aa).

6 helical membrane passes run 21 to 36, 101 to 115, 140 to 156, 203 to 218, 237 to 252, and 457 to 472; these read SVHI…WAGS, IVFS…IWHW, GIHL…FGAF, IAAG…FHLS, VLSS…AFVV, and SFAL…HGAR.

The protein belongs to the PsbB/PsbC family. PsbB subfamily. In terms of assembly, PSII is composed of 1 copy each of membrane proteins PsbA, PsbB, PsbC, PsbD, PsbE, PsbF, PsbH, PsbI, PsbJ, PsbK, PsbL, PsbM, PsbT, PsbX, PsbY, PsbZ, Psb30/Ycf12, at least 3 peripheral proteins of the oxygen-evolving complex and a large number of cofactors. It forms dimeric complexes. Binds multiple chlorophylls. PSII binds additional chlorophylls, carotenoids and specific lipids. is required as a cofactor.

The protein localises to the plastid. It is found in the chloroplast thylakoid membrane. Functionally, one of the components of the core complex of photosystem II (PSII). It binds chlorophyll and helps catalyze the primary light-induced photochemical processes of PSII. PSII is a light-driven water:plastoquinone oxidoreductase, using light energy to abstract electrons from H(2)O, generating O(2) and a proton gradient subsequently used for ATP formation. The polypeptide is Photosystem II CP47 reaction center protein (Acorus calamus var. americanus (American sweet flag)).